An 87-amino-acid chain; its full sequence is Small ribosomal subunit protein bS18 (87 aa).

It belongs to the bacterial ribosomal protein bS18 family. Part of the 30S ribosomal subunit. Forms a tight heterodimer with protein bS6.

Functionally, binds as a heterodimer with protein bS6 to the central domain of the 16S rRNA, where it helps stabilize the platform of the 30S subunit. This chain is Small ribosomal subunit protein bS18, found in Mesomycoplasma hyopneumoniae (strain 232) (Mycoplasma hyopneumoniae).